The following is a 376-amino-acid chain: PqqA peptide cyclase (376 aa).

Residues valine 7–alanine 222 enclose the Radical SAM core domain. [4Fe-4S] cluster-binding residues include cysteine 21, cysteine 25, and cysteine 28.

It belongs to the radical SAM superfamily. PqqE family. Interacts with PqqD. The interaction is necessary for activity of PqqE. Requires [4Fe-4S] cluster as cofactor.

The enzyme catalyses [PQQ precursor protein] + S-adenosyl-L-methionine = E-Y cross-linked-[PQQ precursor protein] + 5'-deoxyadenosine + L-methionine + H(+). The protein operates within cofactor biosynthesis; pyrroloquinoline quinone biosynthesis. Catalyzes the cross-linking of a glutamate residue and a tyrosine residue in the PqqA protein as part of the biosynthesis of pyrroloquinoline quinone (PQQ). The polypeptide is PqqA peptide cyclase (Pseudomonas putida (strain ATCC 700007 / DSM 6899 / JCM 31910 / BCRC 17059 / LMG 24140 / F1)).